The following is a 246-amino-acid chain: Putative carbonic anhydrase 3 (246 aa).

The Alpha-carbonic anhydrase domain maps to 3 to 244 (GHWSYCDDDE…LNDRKIVHIV (242 aa)). Histidine 61 acts as the Proton acceptor in catalysis. Histidine 91, histidine 93, and histidine 116 together coordinate Zn(2+). 187 to 188 (TT) serves as a coordination point for substrate.

The protein belongs to the alpha-carbonic anhydrase family. Requires Zn(2+) as cofactor.

The enzyme catalyses hydrogencarbonate + H(+) = CO2 + H2O. Reversible hydration of carbon dioxide. The chain is Putative carbonic anhydrase 3 (cah-3) from Caenorhabditis elegans.